We begin with the raw amino-acid sequence, 119 residues long: Large ribosomal subunit protein bL19 (119 aa).

The protein belongs to the bacterial ribosomal protein bL19 family.

This protein is located at the 30S-50S ribosomal subunit interface and may play a role in the structure and function of the aminoacyl-tRNA binding site. The protein is Large ribosomal subunit protein bL19 of Saccharopolyspora erythraea (strain ATCC 11635 / DSM 40517 / JCM 4748 / NBRC 13426 / NCIMB 8594 / NRRL 2338).